The sequence spans 136 residues: MILGIGSDFCDARRIEKSIERFGARFTERVFTPLERAKAERRARPAETYAKRFAAKEACAKALGTGIARGVFWRDMGVVNLPSGQPTLELTGGAAARLKEMVPEGYEPRIALSLTDEGPLSAAYVIISAELIGTPR.

Mg(2+)-binding residues include Asp-8 and Glu-57.

The protein belongs to the P-Pant transferase superfamily. AcpS family. Requires Mg(2+) as cofactor.

Its subcellular location is the cytoplasm. The catalysed reaction is apo-[ACP] + CoA = holo-[ACP] + adenosine 3',5'-bisphosphate + H(+). Its function is as follows. Transfers the 4'-phosphopantetheine moiety from coenzyme A to a Ser of acyl-carrier-protein. The polypeptide is Holo-[acyl-carrier-protein] synthase (Azorhizobium caulinodans (strain ATCC 43989 / DSM 5975 / JCM 20966 / LMG 6465 / NBRC 14845 / NCIMB 13405 / ORS 571)).